The chain runs to 284 residues: MTIVNLAAYHFVSLDANEQWRPLVTARCNELGLRGTILLAPEGINLFIAGTREATDAFIAYIRHDPLFEGKFATLQFKESLSDSQPFRRMLVRLKREIITMKKPAIKPELGRAPFVDARTLKAWLDRGHDDAGRPVVMLDTRNAFEVDVGTFDNALDYRIDKFSEFPEVIDANRADLEGKTVVSFCTGGIRCEKAAIHMKEIGIDNVYQLEGGILKYFEEVGGAHYHGDCFVFDYRTALNPQLQPTENVTCFACRAVVTPEAQQSPSYVPGKSCPACAQAASAA.

The 95-residue stretch at 132–226 (AGRPVVMLDT…YFEEVGGAHY (95 aa)) folds into the Rhodanese domain. Cysteine 186 acts as the Cysteine persulfide intermediate in catalysis.

The protein belongs to the TrhO family.

The catalysed reaction is uridine(34) in tRNA + AH2 + O2 = 5-hydroxyuridine(34) in tRNA + A + H2O. In terms of biological role, catalyzes oxygen-dependent 5-hydroxyuridine (ho5U) modification at position 34 in tRNAs. This Burkholderia orbicola (strain MC0-3) protein is tRNA uridine(34) hydroxylase.